A 353-amino-acid polypeptide reads, in one-letter code: uncharacterized protein (353 aa).

The 66-residue stretch at 18–83 folds into the HTH luxR-type domain; that stretch reads NIEFPCLLSE…TLWRDVFLRF (66 aa). Positions 42–61 form a DNA-binding region, H-T-H motif; that stretch reads VNEISKRRNRSIKTVSCQKM. An EAL domain is found at 98–350; it reads NSSVLPVVSS…AFVRKLLASL (253 aa).

This is an uncharacterized protein from Escherichia coli (strain K12).